The sequence spans 35 residues: Kunitz-type serine protease inhibitor G1 (35 aa).

Residues 6–35 (CKLPPDSGPCKGHFPAFYYDPVSSYCQKFI) enclose the BPTI/Kunitz inhibitor domain.

Post-translationally, contains three disulfide bonds. As to expression, expressed by the venom gland.

It localises to the secreted. Functionally, serine protease inhibitor. This Micrurus pyrrhocryptus (Coral snake) protein is Kunitz-type serine protease inhibitor G1.